We begin with the raw amino-acid sequence, 534 residues long: Importin subunit alpha-1b (534 aa).

The IBB domain maps to 1–58 (MSLRPSERAEVRRSRYKVAVDADEGRRRREDNMVEIRKSRREESLLKKRRDGLPAAAA). 8 ARM repeats span residues 111–151 (SPPI…NIAS), 154–193 (SDNT…NVAG), 196–236 (PKCR…NFCR), 238–277 (KPQP…YLSD), 280–319 (NDKI…NIVT), 322–362 (DMQT…NITA), 365–404 (REQI…NATS), and 408–447 (HDQI…NILK). The interval 505-534 (DAMPSGDNAQNGFNFGNQQPNVPSGGFNFG) is disordered. The span at 514–523 (QNGFNFGNQQ) shows a compositional bias: low complexity.

It belongs to the importin alpha family. As to quaternary structure, forms a complex with importin subunit beta-1. The whole complex, most stable and composed of importin alpha and importin beta, is referred to as PTAC or pore targeting complex. In terms of tissue distribution, highly expressed in root and weakly in callus, etiolated leaf and green leaf.

Its subcellular location is the cytoplasm. The protein resides in the perinuclear region. Its function is as follows. Functions in nuclear protein import. Binds specifically and directly to substrates containing either a simple or bipartite NLS motif. Promotes docking of import substrates to the nuclear envelope. In conjunction with importin beta-1, mediates the nuclear envelope docking, and the subsequent translocation into the nucleus of the constitutive morphogenetic 1 (COP1) protein containing bipartite NLS motif. The protein is Importin subunit alpha-1b of Oryza sativa subsp. japonica (Rice).